We begin with the raw amino-acid sequence, 737 residues long: Zinc finger protein 184 (737 aa).

Positions 28-99 (VTFKDVVVNF…DSCIPVGPLE (72 aa)) constitute a KRAB domain. At serine 117 the chain carries Phosphoserine. A Glycyl lysine isopeptide (Lys-Gly) (interchain with G-Cter in SUMO2) cross-link involves residue lysine 185. C2H2-type zinc fingers lie at residues 201–223 (CKCN…QRTH), 229–251 (YKCN…QRIH), 257–279 (YKCD…QRIH), 285–307 (YKCD…QRIH), 313–335 (YTCT…QKIH), 341–363 (FKCE…QKIH), 369–391 (YKCN…HMIH), 397–419 (YECN…QKTH), 425–447 (YDCA…LKIH), 453–475 (YKCS…RRIH), 481–503 (FECS…QKTH), 509–531 (YECK…ERIH), 537–559 (YQCH…KKIH), 565–587 (YKCN…KRIH), 593–615 (YACP…QKTH), 621–643 (YQCN…QRIH), and 649–671 (YKCS…RSTH). The C2H2-type 18; degenerate zinc-finger motif lies at 677 to 698 (YNSECPQTFSQSTYLTQHQKIH). A C2H2-type 19 zinc finger spans residues 704 to 726 (LGCEDCEKAFQCHSALTKHQRLH).

It belongs to the krueppel C2H2-type zinc-finger protein family.

It localises to the nucleus. Its function is as follows. May be involved in transcriptional regulation. The sequence is that of Zinc finger protein 184 (Zfp184) from Mus musculus (Mouse).